The following is a 180-amino-acid chain: Large ribosomal subunit protein uL5 (180 aa).

Belongs to the universal ribosomal protein uL5 family. Part of the 50S ribosomal subunit; part of the 5S rRNA/L5/L18/L25 subcomplex. Contacts the 5S rRNA and the P site tRNA. Forms a bridge to the 30S subunit in the 70S ribosome.

This is one of the proteins that bind and probably mediate the attachment of the 5S RNA into the large ribosomal subunit, where it forms part of the central protuberance. In the 70S ribosome it contacts protein S13 of the 30S subunit (bridge B1b), connecting the 2 subunits; this bridge is implicated in subunit movement. Contacts the P site tRNA; the 5S rRNA and some of its associated proteins might help stabilize positioning of ribosome-bound tRNAs. This chain is Large ribosomal subunit protein uL5, found in Symbiobacterium thermophilum (strain DSM 24528 / JCM 14929 / IAM 14863 / T).